The sequence spans 144 residues: 6-pyruvoyl tetrahydrobiopterin synthase (144 aa).

The propeptide occupies 1 to 4; that stretch reads MNAA. At serine 18 the chain carries Phosphoserine. A Zn(2+)-binding site is contributed by histidine 23. Serine 27 is modified (phosphoserine). Cysteine 42 (proton acceptor) is an active-site residue. Zn(2+)-binding residues include histidine 48 and histidine 50. Histidine 89 functions as the Charge relay system in the catalytic mechanism. Tyrosine 127 carries the phosphotyrosine modification. Glutamate 133 serves as the catalytic Charge relay system.

Belongs to the PTPS family. As to quaternary structure, homohexamer formed of two homotrimers in a head to head fashion. Zn(2+) is required as a cofactor. Phosphorylation of Ser-18 is required for maximal enzyme activity.

It carries out the reaction 7,8-dihydroneopterin 3'-triphosphate = 6-pyruvoyl-5,6,7,8-tetrahydropterin + triphosphate + H(+). It participates in cofactor biosynthesis; tetrahydrobiopterin biosynthesis; tetrahydrobiopterin from 7,8-dihydroneopterin triphosphate: step 1/3. Functionally, involved in the biosynthesis of tetrahydrobiopterin, an essential cofactor of aromatic amino acid hydroxylases. Catalyzes the transformation of 7,8-dihydroneopterin triphosphate into 6-pyruvoyl tetrahydropterin. This is 6-pyruvoyl tetrahydrobiopterin synthase (Pts) from Rattus norvegicus (Rat).